The chain runs to 539 residues: Transcription factor LG2 (539 aa).

Over residues 115–125 (MRQQQQLHSGN) the composition is skewed to polar residues. Disordered stretches follow at residues 115-140 (MRQQ…SAQN) and 181-246 (KPGL…KSRL). Composition is skewed to low complexity over residues 126–137 (SQSVGSTTDSSS) and 192–205 (QQQH…QQQL). The segment covering 219-242 (TRKDGKSVDAKTERRLAQNREAAR) has biased composition (basic and acidic residues). The bZIP domain maps to 227 to 271 (DAKTERRLAQNREAARKSRLRKKAYVQNLETSRVRLQQIEQELQR). Residues 229-249 (KTERRLAQNREAARKSRLRKK) are basic motif. The segment at 255–269 (LETSRVRLQQIEQEL) is leucine-zipper. One can recognise a DOG1 domain in the interval 292–506 (AAMFDMEYAR…RALSNLWSSR (215 aa)). The segment at 513-539 (GTESVSPTGTELQPMHNQPQQNQYSGF) is disordered.

The protein belongs to the bZIP family. In terms of assembly, interacts with NPR1/NH1 and NPR3/NH3.

Its subcellular location is the nucleus. Functionally, transcriptional regulator involved in defense response. Acts as a transcriptional activator in vitro. This is Transcription factor LG2 from Oryza sativa subsp. japonica (Rice).